Consider the following 37-residue polypeptide: Potassium channel toxin alpha-KTx 2.19 (37 aa).

3 disulfide bridges follow: Cys7/Cys28, Cys13/Cys33, and Cys17/Cys35.

As to expression, expressed by the venom gland.

The protein resides in the secreted. Functionally, inhibitor of voltage-gated potassium channels. The protein is Potassium channel toxin alpha-KTx 2.19 of Rhopalurus junceus (Caribbean blue scorpion).